The following is a 320-amino-acid chain: Ino eighty subunit 2 (320 aa).

Composition is skewed to acidic residues over residues 1–12 (MDSEASDIEAEL) and 22–35 (EYIDDDDYTEDIDD). Disordered regions lie at residues 1–232 (MDSE…SKKK) and 244–306 (ENAR…EGMT). The span at 42–59 (SSRRTARRSVPKGVRTSK) shows a compositional bias: basic residues. A Phosphoserine modification is found at serine 67. Acidic residues predominate over residues 68–80 (VEVDEDYDEEEDV). Over residues 105 to 116 (EKSDIGDSKGND) the composition is skewed to basic and acidic residues. Residues 117-130 (GEIEDGILEEEESL) are compositionally biased toward acidic residues. Serine 129 is modified (phosphoserine). The segment covering 131–147 (EKELNRGGGKEVEKSEE) has biased composition (basic and acidic residues). The segment covering 161 to 174 (EEQDGESGGYEDNE) has biased composition (acidic residues). Positions 207-217 (TDSTRSTTTRS) are enriched in low complexity. A compositionally biased stretch (basic and acidic residues) spans 244 to 264 (ENARKRKNLSEKRLEEEKQDT). Residues 268–278 (LLKKRAGKSRS) show a composition bias toward basic residues.

Belongs to the IES2 family. In terms of assembly, component of the chromatin-remodeling INO80 complex, at least composed of ARP4, ARP5, ARP8, RVB1, RVB2, TAF14, NHP10, IES1, IES3, IES4, IES6, ACT1, IES2, IES5 and INO80.

It is found in the nucleus. In terms of biological role, component of the INO80 complex which remodels chromatin by shifting nucleosomes and is involved in DNA repair. This Saccharomyces cerevisiae (strain ATCC 204508 / S288c) (Baker's yeast) protein is Ino eighty subunit 2 (IES2).